The sequence spans 438 residues: MPISKIHARYVYDSRGNPTVEVDVVTELGLHRAIVPSGASTGQHEACELRDGDKTKWGGKGVLKAVQNVNEVIGPALIKENIDVKDQSKVDKFLIDLDGTPNKTKLGANAILGVSLAVAKAGAAEKGVPLYAHISDLAGTKKPYVLPVPFMNVLNGGSHAGGRLAFQEFMIVPSAAPTFSEALRQGAEVYQILKSLAKKKYGQSAGNVGDEGGVAPDIQNPEEALDLITEAIEKAGYTGQVKIAMDVASSEFYKEDVKKYDLDFKNPESDPSKWLTYEELANLYSELCKKYPIVSIEDPFAEDDWEAWSYFYKTQDIQIVADDLTVTNPLRIKKAIELKAANALLLKVNQIGTLTESIQAAKDSYADGWGVMVSHRSGETEDVTIADIVVGIRSGQIKTGAPARSERLAKLNQILRIEEELADNAIFAGEKFRKAVEL.

Substrate is bound by residues His-159 and Glu-168. Residue Glu-211 is the Proton donor of the active site. Residues Asp-246, Glu-297, and Asp-322 each coordinate Mg(2+). Substrate contacts are provided by Glu-297 and Asp-322. Catalysis depends on Lys-347, which acts as the Proton acceptor. Substrate is bound by residues 374–377 and Lys-398; that span reads SHRS.

The protein belongs to the enolase family. As to quaternary structure, homodimer. Mg(2+) is required as a cofactor.

The protein resides in the cytoplasm. The enzyme catalyses (2R)-2-phosphoglycerate = phosphoenolpyruvate + H2O. It participates in carbohydrate degradation; glycolysis; pyruvate from D-glyceraldehyde 3-phosphate: step 4/5. This is Enolase (emp-7) from Neurospora crassa (strain ATCC 24698 / 74-OR23-1A / CBS 708.71 / DSM 1257 / FGSC 987).